A 247-amino-acid polypeptide reads, in one-letter code: Cell division protein ZapD (247 aa).

It belongs to the ZapD family. Interacts with FtsZ.

The protein localises to the cytoplasm. In terms of biological role, cell division factor that enhances FtsZ-ring assembly. Directly interacts with FtsZ and promotes bundling of FtsZ protofilaments, with a reduction in FtsZ GTPase activity. In Shigella flexneri, this protein is Cell division protein ZapD.